A 239-amino-acid chain; its full sequence is Ribosomal RNA small subunit methyltransferase G (239 aa).

S-adenosyl-L-methionine is bound by residues Gly77, Phe82, 128–129 (AE), and Arg146. Positions 217–239 (RRQTSKKYPRKPGTPNKSPLVES) are disordered.

It belongs to the methyltransferase superfamily. RNA methyltransferase RsmG family.

It localises to the cytoplasm. Specifically methylates the N7 position of guanine in position 535 of 16S rRNA. This chain is Ribosomal RNA small subunit methyltransferase G, found in Staphylococcus epidermidis (strain ATCC 12228 / FDA PCI 1200).